We begin with the raw amino-acid sequence, 361 residues long: Peptide chain release factor 1 (361 aa).

N5-methylglutamine is present on Gln-236.

The protein belongs to the prokaryotic/mitochondrial release factor family. In terms of processing, methylated by PrmC. Methylation increases the termination efficiency of RF1.

It is found in the cytoplasm. Its function is as follows. Peptide chain release factor 1 directs the termination of translation in response to the peptide chain termination codons UAG and UAA. This is Peptide chain release factor 1 from Lactobacillus acidophilus (strain ATCC 700396 / NCK56 / N2 / NCFM).